The chain runs to 519 residues: Sterile alpha motif domain-containing protein 1 (519 aa).

Pro residues predominate over residues 1–11 (MAGPPALPPPE). Disordered stretches follow at residues 1–30 (MAGP…ASPH) and 87–232 (YKGS…PVSL). A compositionally biased stretch (low complexity) spans 12 to 29 (TAAAATTAAAASSSAASP). In terms of domain architecture, SAMD1-like winged helix (WH) spans 23–99 (SSSAASPHYQ…SISYRNAARV (77 aa)). At T107 the chain carries Phosphothreonine. Residues 108–133 (PPAPPRVPRGGPAAPPPTPAPPPAPV) are compositionally biased toward pro residues. Low complexity predominate over residues 134 to 147 (AAPTRAPRAAAATA). Phosphoserine is present on S150. Positions 157-166 (GPRAQRAAPL) are enriched in low complexity. Residues 167–217 (AAPPPAPAAPPAAAPPAGPRRAPPPAVAAREPPAPPQQQQPPPPQPQPPPE) show a composition bias toward pro residues. Residues 218–230 (GGAARAGGPARPV) show a composition bias toward low complexity. The residue at position 242 (S242) is a Phosphoserine. Residues 261 to 271 (EAARGRLERTR) show a composition bias toward basic and acidic residues. 2 disordered regions span residues 261 to 381 (EAAR…PGSC) and 417 to 439 (PALP…KPTD). A compositionally biased stretch (acidic residues) spans 308 to 325 (KEEEDEDEDEEEEEEDNV). In terms of domain architecture, SAM spans 443 to 511 (WTVMDVVEYF…KVLQQGHFED (69 aa)).

As to quaternary structure, homopolymerize into a closed pentameric ring. Interacts (via SAM domain) with L3MBTL3 (via SAM domain); the interaction mediates L3MBTL3 binding to chromatin. Interacts (via WH domain) with KDM1A; the interaction modulates KDM1A function. In terms of tissue distribution, expressed to similar levels in different organs. Expressed at higher levels in bone marrow, osteoclasts and spleen. Expressed in vascular smooth muscle cells.

The protein resides in the nucleus. It localises to the chromosome. It is found in the secreted. Its function is as follows. Unmethylated CpG islands (CGIs)-binding protein which localizes to H3K4me3-decorated CGIs, where it acts as a transcriptional repressor. Tethers L3MBTL3 to chromatin and interacts with the KDM1A histone demethylase complex to modulate H3K4me2 and H3K4me3 levels at CGIs. Plays a role in atherogenesis by binding with LDL on cell surface and promoting LDL oxidation which leads to the formation of foam cell. In Mus musculus (Mouse), this protein is Sterile alpha motif domain-containing protein 1.